The chain runs to 790 residues: Endonuclease MutS2 (790 aa).

334–341 (GPNTGGKT) serves as a coordination point for ATP. A Smr domain is found at 715 to 790 (IDVRGQNLEE…GMGVTIVHLK (76 aa)).

The protein belongs to the DNA mismatch repair MutS family. MutS2 subfamily. Homodimer. Binds to stalled ribosomes, contacting rRNA.

Its function is as follows. Endonuclease that is involved in the suppression of homologous recombination and thus may have a key role in the control of bacterial genetic diversity. Functionally, acts as a ribosome collision sensor, splitting the ribosome into its 2 subunits. Detects stalled/collided 70S ribosomes which it binds and splits by an ATP-hydrolysis driven conformational change. Acts upstream of the ribosome quality control system (RQC), a ribosome-associated complex that mediates the extraction of incompletely synthesized nascent chains from stalled ribosomes and their subsequent degradation. Probably generates substrates for RQC. This is Endonuclease MutS2 from Alkaliphilus oremlandii (strain OhILAs) (Clostridium oremlandii (strain OhILAs)).